The sequence spans 127 residues: Mitochondrial pyruvate carrier 2 (127 aa).

The Mitochondrial matrix portion of the chain corresponds to 2-40; that stretch reads AAAGARGLRATYHRLMDKVELLLPKKLRPLYNHPAGPRT. Lys-26 is subject to N6-acetyllysine. The chain crosses the membrane as a helical span at residues 41-61; the sequence is VFFWAPIMKWGLVCAGLADMA. At 62-72 the chain is on the mitochondrial intermembrane side; that stretch reads RPAEKLSTAQS. Residues 73 to 90 traverse the membrane as a helical segment; it reads TVLMATGFIWSRYSLVII. The Mitochondrial matrix segment spans residues 91-95; sequence PKNWS. Residues 96–115 traverse the membrane as a helical segment; the sequence is LFAVNFFVGSAGASQLFRIW. The Mitochondrial intermembrane portion of the chain corresponds to 116–127; the sequence is KYNQELKSKGIQ.

Belongs to the mitochondrial pyruvate carrier (MPC) (TC 2.A.105) family. As to quaternary structure, homodimer. Homooligomer. Forms heterodimers with MPC1 and MPC1L. The heterodimer is the more stable and dominant form. In terms of tissue distribution, liver, kidney, and brain.

It localises to the mitochondrion inner membrane. It carries out the reaction pyruvate(out) + H(+)(out) = pyruvate(in) + H(+)(in). Its function is as follows. Mediates the uptake of pyruvate into mitochondria. The polypeptide is Mitochondrial pyruvate carrier 2 (Mpc2) (Rattus norvegicus (Rat)).